We begin with the raw amino-acid sequence, 314 residues long: Olfactory receptor 51G2 (314 aa).

Residues 1–30 lie on the Extracellular side of the membrane; the sequence is MTLGSLGNSSSSVSATFLLSGIPGLERMHI. N-linked (GlcNAc...) asparagine glycosylation is present at N8. The helical transmembrane segment at 31–51 threads the bilayer; that stretch reads WISIPLCFMYLVSIPGNCTIL. Topologically, residues 52–59 are cytoplasmic; that stretch reads FIIKTERS. Residues 60 to 80 traverse the membrane as a helical segment; that stretch reads LHEPMYLFLSMLALIDLGLSL. Residues 81–104 are Extracellular-facing; the sequence is CTLPTVLGIFWVGAREISHDACFA. An intrachain disulfide couples C102 to C194. A helical membrane pass occupies residues 105–125; the sequence is QLFFIHCFSFLESSVLLSMAF. The Cytoplasmic portion of the chain corresponds to 126–144; it reads DRFVAICHPLHYVSILTNT. A helical transmembrane segment spans residues 145–165; sequence VIGRIGLVSLGRSVALIFPLP. Topologically, residues 166-201 are extracellular; sequence FMLKRFPYCGSPVLSHSYCLHQEVMKLACADMKANS. The chain crosses the membrane as a helical span at residues 202 to 222; the sequence is IYGMFVIVSTVGIDSLLILFS. Topologically, residues 223-242 are cytoplasmic; it reads YALILRTVLSIASRAERFKA. Residues 243–263 form a helical membrane-spanning segment; that stretch reads LNTCVSHICAVLLFYTPMIGL. At 264-278 the chain is on the extracellular side; sequence SVIHRFGKQAPHLVQ. Residues 279 to 299 traverse the membrane as a helical segment; it reads VVMGFMYLLFPPVMNPIVYSV. Residues 300–314 lie on the Cytoplasmic side of the membrane; the sequence is KTKQIRDRVTHAFCY.

Belongs to the G-protein coupled receptor 1 family.

Its subcellular location is the cell membrane. Functionally, odorant receptor. This Homo sapiens (Human) protein is Olfactory receptor 51G2 (OR51G2).